Reading from the N-terminus, the 117-residue chain is MTRIRRGYIARRRRTKIRLFTSSFRGAHSRLTRTIIQQRIKALFSAYRDRDRHKRNFRCLWVTRINAAIRENAVSYSYSTLINNLYKRQLLLNRKILAQLAILNRNCLYLISNDMIK.

This sequence belongs to the bacterial ribosomal protein bL20 family.

The protein resides in the plastid. It localises to the chloroplast. Functionally, binds directly to 23S ribosomal RNA and is necessary for the in vitro assembly process of the 50S ribosomal subunit. It is not involved in the protein synthesizing functions of that subunit. This Populus alba (White poplar) protein is Large ribosomal subunit protein bL20c.